Here is a 1551-residue protein sequence, read N- to C-terminus: Pentafunctional AROM polypeptide (1551 aa).

The segment at 1-379 (MSIEKVPILG…YQLKAHQVSK (379 aa)) is 3-dehydroquinate synthase. NAD(+) contacts are provided by residues 42 to 44 (DTN), 80 to 83 (ENNK), 111 to 113 (GGV), and Asp116. A 7-phospho-2-dehydro-3-deoxy-D-arabino-heptonate-binding site is contributed by Arg127. 136–137 (TT) lines the NAD(+) pocket. 7-phospho-2-dehydro-3-deoxy-D-arabino-heptonate-binding residues include Asp143 and Lys149. Lys158 is a binding site for NAD(+). Residue Asn159 participates in 7-phospho-2-dehydro-3-deoxy-D-arabino-heptonate binding. Residues 176 to 179 (FLET) and Asn187 each bind NAD(+). Glu191 is a binding site for Zn(2+). Residues 191-194 (EVVK) and Lys243 contribute to the 7-phospho-2-dehydro-3-deoxy-D-arabino-heptonate site. Glu253 functions as the Proton acceptor; for 3-dehydroquinate synthase activity in the catalytic mechanism. Residues 257–261 (RNLLN) and His264 contribute to the 7-phospho-2-dehydro-3-deoxy-D-arabino-heptonate site. His264 serves as a coordination point for Zn(2+). The active-site Proton acceptor; for 3-dehydroquinate synthase activity is His268. 2 residues coordinate 7-phospho-2-dehydro-3-deoxy-D-arabino-heptonate: His280 and Lys351. A Zn(2+)-binding site is contributed by His280. An EPSP synthase region spans residues 392 to 838 (VHPFTNPPKE…WDILHSKFKI (447 aa)). The tract at residues 858-1048 (DKSIIVIGMR…VPAGRSAAVV (191 aa)) is shikimate kinase. 865–872 (GMRGTGKS) contacts ATP. The interval 1049-1258 (LTSPDLNEVV…NDEEFLTIGE (210 aa)) is 3-dehydroquinase. The active-site Schiff-base intermediate with substrate; for 3-dehydroquinate dehydratase activity is Arg1194. The interval 1271-1551 (AKKFWVIGSP…EIIHRAVVEE (281 aa)) is shikimate dehydrogenase.

The protein in the N-terminal section; belongs to the sugar phosphate cyclases superfamily. Dehydroquinate synthase family. This sequence in the 2nd section; belongs to the EPSP synthase family. In the 3rd section; belongs to the shikimate kinase family. It in the 4th section; belongs to the type-I 3-dehydroquinase family. The protein in the C-terminal section; belongs to the shikimate dehydrogenase family. As to quaternary structure, homodimer. Zn(2+) is required as a cofactor.

The protein resides in the cytoplasm. The enzyme catalyses 7-phospho-2-dehydro-3-deoxy-D-arabino-heptonate = 3-dehydroquinate + phosphate. It carries out the reaction 3-dehydroquinate = 3-dehydroshikimate + H2O. The catalysed reaction is shikimate + NADP(+) = 3-dehydroshikimate + NADPH + H(+). It catalyses the reaction shikimate + ATP = 3-phosphoshikimate + ADP + H(+). The enzyme catalyses 3-phosphoshikimate + phosphoenolpyruvate = 5-O-(1-carboxyvinyl)-3-phosphoshikimate + phosphate. It participates in metabolic intermediate biosynthesis; chorismate biosynthesis; chorismate from D-erythrose 4-phosphate and phosphoenolpyruvate: step 2/7. The protein operates within metabolic intermediate biosynthesis; chorismate biosynthesis; chorismate from D-erythrose 4-phosphate and phosphoenolpyruvate: step 3/7. Its pathway is metabolic intermediate biosynthesis; chorismate biosynthesis; chorismate from D-erythrose 4-phosphate and phosphoenolpyruvate: step 4/7. It functions in the pathway metabolic intermediate biosynthesis; chorismate biosynthesis; chorismate from D-erythrose 4-phosphate and phosphoenolpyruvate: step 5/7. It participates in metabolic intermediate biosynthesis; chorismate biosynthesis; chorismate from D-erythrose 4-phosphate and phosphoenolpyruvate: step 6/7. The AROM polypeptide catalyzes 5 consecutive enzymatic reactions in prechorismate polyaromatic amino acid biosynthesis. This is Pentafunctional AROM polypeptide from Candida albicans (strain SC5314 / ATCC MYA-2876) (Yeast).